A 216-amino-acid polypeptide reads, in one-letter code: 3-isopropylmalate dehydratase small subunit (216 aa).

The protein belongs to the LeuD family. LeuD type 1 subfamily. Heterodimer of LeuC and LeuD.

It catalyses the reaction (2R,3S)-3-isopropylmalate = (2S)-2-isopropylmalate. It functions in the pathway amino-acid biosynthesis; L-leucine biosynthesis; L-leucine from 3-methyl-2-oxobutanoate: step 2/4. Catalyzes the isomerization between 2-isopropylmalate and 3-isopropylmalate, via the formation of 2-isopropylmaleate. This chain is 3-isopropylmalate dehydratase small subunit, found in Acinetobacter baylyi (strain ATCC 33305 / BD413 / ADP1).